The primary structure comprises 110 residues: Snake venom vascular endothelial growth factor toxin HF (110 aa).

Glutamine 1 carries the pyrrolidone carboxylic acid modification. Disulfide bonds link cysteine 14/cysteine 56, cysteine 45/cysteine 91, and cysteine 49/cysteine 93.

This sequence belongs to the PDGF/VEGF growth factor family. Snake venom VEGF subfamily. Homodimer; disulfide-linked. Interacts with VEGF receptor-2 (KDR) with high affinity. Expressed by the venom gland.

Its subcellular location is the secreted. Snake venom VEGFs that may contribute to venom dispersion and prey subjugation by inducing vascular permeability and hypotension. This protein induces an increase in capillary permeability after intradermal injection, as well as a drastic hypotensive effect after intravenous injection. The hypotension is mediated by nitric oxide (NO), which is produced by VEGF-activated endothelium NO synthase. Also induces angiogenesis in vitro, probably through VEGF receptor (KDR/VEGFR-2) signaling. The polypeptide is Snake venom vascular endothelial growth factor toxin HF (Vipera aspis aspis (Aspic viper)).